A 234-amino-acid chain; its full sequence is MTDDISKLFSRATRKALIGWETNLTAEEIIQELWVWYLESPYIQKTLESLHRGEAVHYVRNQVRNILSGAAKARDLFQERSHYSSENVKEALQGESTNRYLVDILPLAMKALDAQNGGYAEAIRSRYTDGISPKDKSGQNRLFRAHKSLTEHVNIIAITAGVEKDDKGKVIVKDGPGSKHAIFPDIRKSQGDGHSDPTANIAIMLIENPELRDGYLYEPPISEFLGGRCHAQHS.

The protein is Gene 53 protein (53) of Mycobacterium phage L5 (Mycobacteriophage L5).